The sequence spans 624 residues: Vitamin B12 transporter BtuB (624 aa).

The first 21 residues, Met-1–Ala-21, serve as a signal peptide directing secretion. The TonB box motif lies at Asn-31–Asn-38. In terms of domain architecture, TBDR plug spans Pro-43–Glu-157. Cyanocob(III)alamin-binding positions include Leu-88, Ser-90, Asn-97, and Ile-115–Ser-116. Positions Thr-160–Phe-624 constitute a TBDR beta-barrel domain. 3 beta stranded membrane-spanning segments follow: residues Ser-163–Gly-170, Tyr-174–Gln-183, and Thr-189–Ser-200. Residues Asp-204, Gln-216, Asp-218, and Asp-220 each contribute to the Ca(2+) site. 2 beta stranded membrane-spanning segments follow: residues Tyr-222–Asn-232 and Glu-237–Asp-253. Residues Tyr-254, Asp-255, and Asp-266 each coordinate Ca(2+). The next 17 membrane-spanning stretches (beta stranded) occupy residues Arg-268 to Ser-282, Gly-284 to Asn-301, Thr-314 to Gln-330, Leu-333 to Trp-342, Tyr-358 to Gly-374, Val-376 to Asp-386, Phe-390 to Val-405, Tyr-408 to Asn-422, Glu-440 to Thr-449, Leu-455 to Asn-464, Tyr-481 to Phe-498, Pro-502 to Ala-517, Arg-525 to Trp-537, Asp-543 to Ser-557, Pro-568 to Ser-582, Ile-595 to Val-606, and Pro-612 to Phe-624. Thr-314 contacts cyanocob(III)alamin. Arg-525 provides a ligand contact to cyanocob(III)alamin. A TonB C-terminal box motif is present at residues Tyr-607–Phe-624.

This sequence belongs to the TonB-dependent receptor family. BtuB (TC 1.B.14.3.1) subfamily.

It localises to the cell outer membrane. In terms of biological role, involved in the active translocation of vitamin B12 (cyanocobalamin) across the outer membrane to the periplasmic space. It derives its energy for transport by interacting with the trans-periplasmic membrane protein TonB. The chain is Vitamin B12 transporter BtuB from Yersinia pseudotuberculosis serotype O:1b (strain IP 31758).